The primary structure comprises 707 residues: Elongation factor G (707 aa).

Positions 8-297 (ERVRNIGIAA…AVLDYLPSPL (290 aa)) constitute a tr-type G domain. GTP is bound by residues 17–24 (AHIDAGKT), 96–100 (DTPGH), and 150–153 (NKMD).

It belongs to the TRAFAC class translation factor GTPase superfamily. Classic translation factor GTPase family. EF-G/EF-2 subfamily.

It localises to the cytoplasm. Its function is as follows. Catalyzes the GTP-dependent ribosomal translocation step during translation elongation. During this step, the ribosome changes from the pre-translocational (PRE) to the post-translocational (POST) state as the newly formed A-site-bound peptidyl-tRNA and P-site-bound deacylated tRNA move to the P and E sites, respectively. Catalyzes the coordinated movement of the two tRNA molecules, the mRNA and conformational changes in the ribosome. The sequence is that of Elongation factor G from Gloeobacter violaceus (strain ATCC 29082 / PCC 7421).